We begin with the raw amino-acid sequence, 234 residues long: Sugar fermentation stimulation protein homolog (234 aa).

It belongs to the SfsA family.

This Shewanella halifaxensis (strain HAW-EB4) protein is Sugar fermentation stimulation protein homolog.